Reading from the N-terminus, the 178-residue chain is Large ribosomal subunit protein uL6 (178 aa).

It belongs to the universal ribosomal protein uL6 family. In terms of assembly, part of the 50S ribosomal subunit.

Functionally, this protein binds to the 23S rRNA, and is important in its secondary structure. It is located near the subunit interface in the base of the L7/L12 stalk, and near the tRNA binding site of the peptidyltransferase center. This is Large ribosomal subunit protein uL6 from Leifsonia xyli subsp. xyli (strain CTCB07).